We begin with the raw amino-acid sequence, 573 residues long: Probable D-xylulose kinase A (573 aa).

Residues His-100, Arg-171, Asp-287, and Asn-288 each contribute to the substrate site. ATP contacts are provided by residues Trp-368, 473–474, and Asn-477; that span reads GG.

It belongs to the FGGY kinase family.

It is found in the cytoplasm. The catalysed reaction is D-xylulose + ATP = D-xylulose 5-phosphate + ADP + H(+). Highly specific D-xylulose kinase which participates in the catabolism of xylose. Xylose is a major component of hemicelluloses such as xylan. Most fungi utilize D-xylose via three enzymatic reactions, xylose reductase (XR), xylitol dehydrogenase (XDH), and xylulokinase, to form xylulose 5-phosphate, which enters pentose phosphate pathway. The polypeptide is Probable D-xylulose kinase A (xkiA) (Aspergillus terreus (strain NIH 2624 / FGSC A1156)).